The chain runs to 163 residues: uncharacterized protein (163 aa).

The disordered stretch occupies residues 1 to 54 (MGKSARLRRSQTSSPENVLLGKDSSDDPYRSDSETESNSSSGTESNMSSDSTTS). Residues 23 to 33 (DSSDDPYRSDS) show a composition bias toward basic and acidic residues. Residues 36–52 (ESNSSSGTESNMSSDST) show a composition bias toward low complexity. Positions 69–143 (LRTELAEMEM…VEELESSTRE (75 aa)) form a coiled coil.

This is an uncharacterized protein from Arabidopsis thaliana (Mouse-ear cress).